The chain runs to 520 residues: Probable methylmalonate-semialdehyde/malonate-semialdehyde dehydrogenase [acylating], mitochondrial (520 aa).

Residues alanine 169, phenylalanine 171, lysine 195, glutamate 198, arginine 199, and serine 248 each contribute to the NAD(+) site. The active-site Nucleophile is cysteine 303. Position 403 (glutamate 403) interacts with NAD(+).

It belongs to the aldehyde dehydrogenase family. In terms of assembly, homotetramer.

Its subcellular location is the mitochondrion. It carries out the reaction 2-methyl-3-oxopropanoate + NAD(+) + CoA + H2O = propanoyl-CoA + hydrogencarbonate + NADH + H(+). The enzyme catalyses 3-oxopropanoate + NAD(+) + CoA + H2O = hydrogencarbonate + acetyl-CoA + NADH + H(+). Probable malonate and methylmalonate semialdehyde dehydrogenase involved in the catabolism of valine, thymine, and compounds catabolized by way of beta-alanine, including uracil and cytidine. In Drosophila melanogaster (Fruit fly), this protein is Probable methylmalonate-semialdehyde/malonate-semialdehyde dehydrogenase [acylating], mitochondrial.